Here is a 203-residue protein sequence, read N- to C-terminus: MRVVVPFSATEPKTRLAPVLDADERRAFARVMLADVLDALDTVGVDPTVLATEAIDLDRPVTVDDRPLDAAINGLLAASDEPVAVVMADLALATPDALDRLFAAEGDVVLAPGRGGGTNAFVARHPDFRVDYHDASIRDHRRIARDAGGTVTEIDSYRLSTDVDEPADLAEVLLHGEGRAADWLRGAGVQLTVADGRTTVERP.

This sequence belongs to the CofC family. Homodimer.

The enzyme catalyses (2S)-2-phospholactate + GTP + H(+) = (2S)-lactyl-2-diphospho-5'-guanosine + diphosphate. It functions in the pathway cofactor biosynthesis; coenzyme F420 biosynthesis. Guanylyltransferase that catalyzes the activation of (2S)-2-phospholactate (2-PL) as (2S)-lactyl-2-diphospho-5'-guanosine, via the condensation of 2-PL with GTP. It is involved in the biosynthesis of coenzyme F420, a hydride carrier cofactor. The sequence is that of 2-phospho-L-lactate guanylyltransferase from Halomicrobium mukohataei (strain ATCC 700874 / DSM 12286 / JCM 9738 / NCIMB 13541) (Haloarcula mukohataei).